Reading from the N-terminus, the 193-residue chain is Interferon lambda-2 (193 aa).

The first 19 residues, 1-19 (MLLLLLPLLLAAVLTRTQA), serve as a signal peptide directing secretion. The N-linked (GlcNAc...) asparagine glycan is linked to Asn-105.

Belongs to the lambda interferon family.

It localises to the secreted. Functionally, cytokine with antiviral, antitumour and immunomodulatory activities. Plays a critical role in the antiviral host defense, predominantly in the epithelial tissues. Acts as a ligand for the heterodimeric class II cytokine receptor composed of IL10RB and IFNLR1, and receptor engagement leads to the activation of the JAK/STAT signaling pathway resulting in the expression of IFN-stimulated genes (ISG), which mediate the antiviral state. Has a restricted receptor distribution and therefore restricted targets: is primarily active in epithelial cells and this cell type-selective action is because of the epithelial cell-specific expression of its receptor IFNLR1. Seems not to be essential for early virus-activated host defense in vaginal infection, but plays an important role in Toll-like receptor (TLR)-induced antiviral defense. Plays a significant role in the antiviral immune defense in the intestinal epithelium. Exerts an immunomodulatory effect by up-regulating MHC class I antigen expression. This chain is Interferon lambda-2 (Ifnl2), found in Mus musculus (Mouse).